The following is a 59-amino-acid chain: UPF0434 protein COSY_0767 (59 aa).

It belongs to the UPF0434 family.

In Vesicomyosocius okutanii subsp. Calyptogena okutanii (strain HA), this protein is UPF0434 protein COSY_0767.